Reading from the N-terminus, the 130-residue chain is Small ribosomal subunit protein uS11c (130 aa).

It belongs to the universal ribosomal protein uS11 family. In terms of assembly, part of the 30S ribosomal subunit.

It is found in the plastid. The protein localises to the chloroplast. The sequence is that of Small ribosomal subunit protein uS11c from Chaetosphaeridium globosum (Charophycean green alga).